Here is a 2126-residue protein sequence, read N- to C-terminus: Phthioceranic/hydroxyphthioceranic acid synthase (2126 aa).

The 424-residue stretch at 24–447 (VTPVAVIGMA…GTNVHAVVEQ (424 aa)) folds into the Ketosynthase family 3 (KS3) domain. The active-site Acyl-thioester intermediate; for beta-ketoacyl synthase activity is the cysteine 196. Catalysis depends on for beta-ketoacyl synthase activity residues histidine 331 and histidine 367. Positions 449–549 (PQTEAQPHAA…VYQPAVGQDD (101 aa)) are linker domain (LD). The tract at residues 550–849 (RGPVWLFSGQ…VAALAGMRRE (300 aa)) is acyltransferase (AT). Serine 641 functions as the Acyl-ester intermediate; for acyltransferase activity in the catalytic mechanism. A dehydratase (DH) region spans residues 909–1191 (STVAVHPLLG…LAVCGLRIGT (283 aa)). The interval 914-1032 (HPLLGAHVRL…RRASAVLQQV (119 aa)) is N-terminal hotdog fold. Positions 914-1198 (HPLLGAHVRL…IGTGVSERDK (285 aa)) constitute a PKS/mFAS DH domain. Histidine 947 (proton acceptor; for dehydratase activity) is an active-site residue. The interval 1051-1198 (PCRVDGEDLR…IGTGVSERDK (148 aa)) is C-terminal hotdog fold. Catalysis depends on aspartate 1115, which acts as the Proton donor; for dehydratase activity. The interval 1227–1398 (KWLLISDCAA…SEEDETAWRD (172 aa)) is pseudo beta-ketoacyl reductase (PsiKR). Residues 1426 to 1750 (SGMRLQIRTP…EHTGKLVLHI (325 aa)) are enoylreductase (ER). Residues 1772–2019 (GSYIITGGLG…AERSRFFEVF (248 aa)) form a beta-ketoacyl reductase (KR) region. NADP(+) contacts are provided by residues 1780-1783 (LGGL), 1803-1806 (SRTQ), 1831-1832 (DI), and 1904-1905 (FS). Positions 2040–2126 (DEWPARLRQL…DAPAAALSSQ (87 aa)) constitute a Carrier domain. The residue at position 2075 (serine 2075) is an O-(pantetheine 4'-phosphoryl)serine.

Pantetheine 4'-phosphate is required as a cofactor.

The catalysed reaction is hexadecanoyl-[(hydroxy)phthioceranic acid synthase] + 7 (S)-methylmalonyl-CoA + 14 NADPH + 21 H(+) = C37-phthioceranyl-[(hydroxy)phthioceranic acid synthase] + 7 CO2 + 14 NADP(+) + 7 CoA + 7 H2O. The enzyme catalyses hexadecanoyl-[(hydroxy)phthioceranic acid synthase] + 8 (S)-methylmalonyl-CoA + 16 NADPH + 24 H(+) = C40-phthioceranyl-[(hydroxy)phthioceranic acid synthase] + 8 CO2 + 16 NADP(+) + 8 CoA + 8 H2O. It functions in the pathway lipid metabolism; fatty acid biosynthesis. Its pathway is glycolipid metabolism; sulfolipid-1 biosynthesis. Functionally, involved in sulfolipid-1 biosynthesis. Catalyzes the synthesis of the hepta- and octamethyl phthioceranic and hydroxyphthioceranic acids, the methyl-branched acyl constituents of sulfolipids. The sequence is that of Phthioceranic/hydroxyphthioceranic acid synthase (pks2) from Mycobacterium bovis (strain ATCC BAA-935 / AF2122/97).